Consider the following 314-residue polypeptide: Melanoma-associated antigen 12 (314 aa).

A compositionally biased stretch (basic and acidic residues) spans 1–14 (MPLEQRSQHCKPEE). The segment at 1–72 (MPLEQRSQHC…HSPQGASTLP (72 aa)) is disordered. Residues 17–44 (EAQGEALGLVGAQAPATEEQETASSSST) show a composition bias toward low complexity. The 200-residue stretch at 109–308 (LSRKMAELVH…ISYPPLHEWA (200 aa)) folds into the MAGE domain.

In terms of tissue distribution, expressed in many tumors of several types, such as melanoma, head and neck squamous cell carcinoma, lung carcinoma and breast carcinoma, but not in normal tissues except for testes.

Not known, though may play a role tumor transformation or progression. In vitro promotes cell viability in melanoma cell lines. The protein is Melanoma-associated antigen 12 (MAGEA12) of Homo sapiens (Human).